The following is a 424-amino-acid chain: Adenylosuccinate synthetase (424 aa).

Residues 12-18 (GDEGKGK) and 40-42 (GHT) each bind GTP. Catalysis depends on Asp13, which acts as the Proton acceptor. The Mg(2+) site is built by Asp13 and Gly40. Residues 13 to 16 (DEGK), 38 to 41 (NAGH), Thr128, Arg142, Gln223, Thr238, and Arg302 contribute to the IMP site. Residue His41 is the Proton donor of the active site. 298–304 (TTTGRPR) is a binding site for substrate. GTP contacts are provided by residues Arg304, 330–332 (HVD), and 412–414 (GVG).

Belongs to the adenylosuccinate synthetase family. As to quaternary structure, homodimer. Mg(2+) is required as a cofactor.

It is found in the cytoplasm. It catalyses the reaction IMP + L-aspartate + GTP = N(6)-(1,2-dicarboxyethyl)-AMP + GDP + phosphate + 2 H(+). The protein operates within purine metabolism; AMP biosynthesis via de novo pathway; AMP from IMP: step 1/2. Its function is as follows. Plays an important role in the de novo pathway of purine nucleotide biosynthesis. Catalyzes the first committed step in the biosynthesis of AMP from IMP. This is Adenylosuccinate synthetase from Acetivibrio thermocellus (strain ATCC 27405 / DSM 1237 / JCM 9322 / NBRC 103400 / NCIMB 10682 / NRRL B-4536 / VPI 7372) (Clostridium thermocellum).